The sequence spans 416 residues: Serine hydroxymethyltransferase (416 aa).

(6S)-5,6,7,8-tetrahydrofolate contacts are provided by residues L119 and 123–125 (GHL). N6-(pyridoxal phosphate)lysine is present on K228. Residue E243 coordinates (6S)-5,6,7,8-tetrahydrofolate.

This sequence belongs to the SHMT family. Homodimer. Requires pyridoxal 5'-phosphate as cofactor.

It localises to the cytoplasm. The catalysed reaction is (6R)-5,10-methylene-5,6,7,8-tetrahydrofolate + glycine + H2O = (6S)-5,6,7,8-tetrahydrofolate + L-serine. It participates in one-carbon metabolism; tetrahydrofolate interconversion. It functions in the pathway amino-acid biosynthesis; glycine biosynthesis; glycine from L-serine: step 1/1. In terms of biological role, catalyzes the reversible interconversion of serine and glycine with tetrahydrofolate (THF) serving as the one-carbon carrier. This reaction serves as the major source of one-carbon groups required for the biosynthesis of purines, thymidylate, methionine, and other important biomolecules. Also exhibits THF-independent aldolase activity toward beta-hydroxyamino acids, producing glycine and aldehydes, via a retro-aldol mechanism. The polypeptide is Serine hydroxymethyltransferase (Desulforapulum autotrophicum (strain ATCC 43914 / DSM 3382 / VKM B-1955 / HRM2) (Desulfobacterium autotrophicum)).